We begin with the raw amino-acid sequence, 271 residues long: NH(3)-dependent NAD(+) synthetase (271 aa).

ATP is bound at residue 43–50 (GISGGQDS). Asp-49 serves as a coordination point for Mg(2+). Residue Arg-137 coordinates deamido-NAD(+). Residue Thr-157 participates in ATP binding. Glu-162 is a binding site for Mg(2+). 2 residues coordinate deamido-NAD(+): Lys-170 and Asp-177. ATP-binding residues include Lys-186 and Thr-208. 257–258 (HK) is a deamido-NAD(+) binding site.

The protein belongs to the NAD synthetase family. Homodimer.

The enzyme catalyses deamido-NAD(+) + NH4(+) + ATP = AMP + diphosphate + NAD(+) + H(+). It functions in the pathway cofactor biosynthesis; NAD(+) biosynthesis; NAD(+) from deamido-NAD(+) (ammonia route): step 1/1. Functionally, catalyzes the ATP-dependent amidation of deamido-NAD to form NAD. Uses ammonia as a nitrogen source. This is NH(3)-dependent NAD(+) synthetase from Exiguobacterium sp. (strain ATCC BAA-1283 / AT1b).